Consider the following 232-residue polypeptide: Thrombin-like enzyme bothrombin (232 aa).

A Peptidase S1 domain is found at 1 to 223; that stretch reads VIGGDECDIN…YLPWIQSIIA (223 aa). 6 disulfides stabilise this stretch: Cys7/Cys139, Cys26/Cys42, Cys74/Cys230, Cys118/Cys184, Cys150/Cys163, and Cys174/Cys199. Residues His41 and Asp86 each act as charge relay system in the active site. 2 N-linked (GlcNAc...) asparagine glycosylation sites follow: Asn98 and Asn146. Ser178 acts as the Charge relay system in catalysis. Residue Asn225 is glycosylated (N-linked (GlcNAc...) asparagine).

Belongs to the peptidase S1 family. Snake venom subfamily. Monomer. In terms of tissue distribution, expressed by the venom gland.

Its subcellular location is the secreted. It catalyses the reaction Selective cleavage of Arg-|-Xaa bond in fibrinogen, to form fibrin, and release fibrinopeptide A. The specificity of further degradation of fibrinogen varies with species origin of the enzyme.. Inhibited by diisopropylfluorophosphate (DFP), but not by hirudin. Functionally, thrombin-like snake venom serine protease that clots fibrinogen by releasing fibrinopeptide A from the alpha chain of fibrinogen (FGA), induces platelet aggregation through its interaction with GPIb (GP1BA/GP1BB), and activates factor VIII (F8). This Bothrops jararaca (Jararaca) protein is Thrombin-like enzyme bothrombin.